Here is a 115-residue protein sequence, read N- to C-terminus: MAPQRMKNPPHPGLLIKSDLDGLGINITEAAKALDVTRAALSEIINGKRGISAKMAWKLSKAFTNSDPEFWLALQAKYDLSQVGEQCADKVRVLWQPSSLDNEGIEVNSSENKVK.

One can recognise an HTH cro/C1-type domain in the interval 16–70 (IKSDLDGLGINITEAAKALDVTRAALSEIINGKRGISAKMAWKLSKAFTNSDPEF). The segment at residues 27-46 (ITEAAKALDVTRAALSEIIN) is a DNA-binding region (H-T-H motif).

Belongs to the VapA/VapI family.

This chain is Virulence-associated protein A' (vapA'), found in Dichelobacter nodosus (Bacteroides nodosus).